The sequence spans 675 residues: Protein PALS1 (675 aa).

The tract at residues 1–345 (MTTSYMNGHV…QQIKPPPAKE (345 aa)) is required for the correct localization of PALS1 and PATJ at cell-cell contacts and the normal formation of tight junctions and adherens junctions. Residues Ser-14 and Ser-25 each carry the phosphoserine modification. Residues 21–140 (LDLASPEEYP…LKHIQHTLVD (120 aa)) form an interaction with PARD6B region. Residues 51–79 (RRSAQLERIRQQQEDMRRRREEEGKKQEL) are disordered. A compositionally biased stretch (basic and acidic residues) spans 54 to 79 (AQLERIRQQQEDMRRRREEEGKKQEL). Residues Ser-83 and Ser-84 each carry the phosphoserine modification. 2 L27 domains span residues 120-177 (NILD…SKAS) and 179-235 (PFPL…MQLE). The segment at 181–243 (PLIANVQDLV…LEPITDERVY (63 aa)) is interaction with LIN7C. The region spanning 256-336 (IVRIEKARDI…TLTFVLIPSQ (81 aa)) is the PDZ domain. Positions 345–417 (ETVIHVKAHF…PGKSFQQQRE (73 aa)) constitute an SH3 domain. In terms of domain architecture, Guanylate kinase-like spans 479–660 (KRPIILIGPQ…AYQELLRLIN (182 aa)). Position 486–493 (486–493 (GPQNCGQN)) interacts with ATP.

Belongs to the MAGUK family. Heterodimer with MPP1. Forms a heterotrimeric complex composed of PALS1, LIN7B and PATJ; the N-terminal L27 domain of PALS1 interacts with the L27 domain of PATJ and the C-terminal L27 domain of PALS1 interacts with the L27 domain of LIN7B. Component of a complex composed of PALS1, CRB1 and MPP4. Component of a complex whose core is composed of ARHGAP17, AMOT, PALS1, PATJ and PARD3/PAR3. Component of a complex composed of PALS1, CRB1 and EPB41L5. Within the complex, interacts (via HOOK domain) with EPB41L5 (via FERM domain), and interacts with CRB1 (via intracellular domain). Component of a complex composed of PALS1, MPP3 and CRB1; PALS1 acts as a bridging protein between MPP3 (via guanylate kinase-like domain) and CRB1. Component of a complex composed of CRB3, PALS1 and PATJ. As part of the Crumbs complex; interacts with WWP1, the interaction is enhanced by AMOTL2 and facilitates WWP1 localization to the plasma membrane. The Crumbs complex promotes monoubiquitination of AMOTL2 by WWP1, which activates the Hippo signaling pathway. Interacts (via PDZ domain) with PATJ (via N-terminus). Interacts with EZR. Interacts (via PDZ domain) with CRB1 (via C-terminal ERLI motif). While the PDZ domain is sufficient for interaction with CRB1, the adjacent SH3 and guanylate kinase-like domains are likely to contribute to a high affinity interaction. Interacts with WWTR1/TAZ (via WW domain). Interacts with MPP7. Interacts (via PDZ domain) with CRB3 (via C-terminus). Interacts with LIN7C. Interacts with MPDZ. Interacts with PARD6B. Interacts with SC6A1. Interacts with CDH5; the interaction promotes PALS1 localization to cell junctions and is required for CDH5-mediated vascular lumen formation and endothelial cell. Interacts with NPHP1 (via coiled coil and SH3 domains). Interacts with NPHP4. Interacts with CRB2. In terms of tissue distribution, expressed in the retinal pigment epithelium (at protein level). Expressed in the vascular plexus of the retina (at protein level). In the brain, expressed in the dentate gyrus of hippocampus, striatum and cerebellum (at protein level). Expressed in the sciatic nerve (at protein level). Expressed in the kidney nephron (at protein level). Expressed in the lung, and heart. Expressed in placenta, brain, skeletal muscles, pancreas and liver.

The protein localises to the golgi apparatus. It is found in the cell membrane. Its subcellular location is the endomembrane system. The protein resides in the cell junction. It localises to the tight junction. The protein localises to the adherens junction. It is found in the cell projection. Its subcellular location is the axon. The protein resides in the perikaryon. It localises to the apical cell membrane. Functionally, plays a role in tight junction biogenesis and in the establishment of cell polarity in epithelial cells. Also involved in adherens junction biogenesis by ensuring correct localization of the exocyst complex protein EXOC4/SEC8 which allows trafficking of adherens junction structural component CDH1 to the cell surface. Plays a role through its interaction with CDH5 in vascular lumen formation and endothelial membrane polarity. Required during embryonic and postnatal retinal development. Required for the maintenance of cerebellar progenitor cells in an undifferentiated proliferative state, preventing premature differentiation, and is required for cerebellar histogenesis, fissure formation, cerebellar layer organization and cortical development. Plays a role in neuronal progenitor cell survival, potentially via promotion of mTOR signaling. Plays a role in the radial and longitudinal extension of the myelin sheath in Schwann cells. May modulate SC6A1/GAT1-mediated GABA uptake by stabilizing the transporter. May play a role in the T-cell receptor-mediated activation of NF-kappa-B. Required for localization of EZR to the apical membrane of parietal cells and may play a role in the dynamic remodeling of the apical cytoskeleton. Required for the normal polarized localization of the vesicular marker STX4. Required for the correct trafficking of the myelin proteins PMP22 and MAG. Involved in promoting phosphorylation and cytoplasmic retention of transcriptional coactivators YAP1 and WWTR1/TAZ which leads to suppression of TGFB1-dependent transcription of target genes such as CCN2/CTGF, SERPINE1/PAI1, SNAI1/SNAIL1 and SMAD7. The sequence is that of Protein PALS1 from Mus musculus (Mouse).